The following is a 1359-amino-acid chain: Transcriptional regulator ATRX homolog (1359 aa).

A disordered region spans residues 1–402 (MRVGVSESED…RAEKERRKRL (402 aa)). Basic and acidic residues predominate over residues 11-49 (SDGHVIEDEDLEMARQIENERKEKRAQKLKEKREREGKP). Basic residues predominate over residues 50–61 (PPKKRPAKKRKA). Positions 64 to 73 (SEEDDDDEEE) are enriched in acidic residues. 6 stretches are compositionally biased toward basic residues: residues 77 to 86 (KSSKKSRKRA), 103 to 123 (KSKS…KKRT), 139 to 149 (KSKKKSKKTKK), 165 to 177 (VKKS…KSVK), 194 to 204 (KKSKKGLKKKA), and 219 to 229 (KKSKKKSKKVV). Acidic residues predominate over residues 257–271 (ESSESEKSDEEEEEK). The segment covering 321 to 336 (KDQKSESEASDVEEKV) has biased composition (basic and acidic residues). Positions 347-357 (SESGSDSSEGS) are enriched in low complexity. Residues 362-376 (RKSKKKEKPEKKKKG) are compositionally biased toward basic residues. Basic and acidic residues predominate over residues 383–397 (KLQKETIDAERAEKE). Positions 483 to 685 (DRLDTEGSGG…HCMVNFVKPG (203 aa)) constitute a Helicase ATP-binding domain. 496-503 (HCMGLGKT) provides a ligand contact to ATP. The short motif at 636 to 639 (DEAH) is the DEAH box element. The interval 809–891 (RVMREDAEEE…NSDDEDEEDG (83 aa)) is disordered. The segment covering 814–832 (DAEEEADFIDDGDGSESES) has biased composition (acidic residues). The segment covering 833 to 847 (EGSFKSGSESDSGKS) has biased composition (low complexity). The Helicase C-terminal domain occupies 951–1134 (LLVEIIKKCE…EAQIQRHYLG (184 aa)).

The protein belongs to the SNF2/RAD54 helicase family.

The protein resides in the nucleus. The catalysed reaction is ATP + H2O = ADP + phosphate + H(+). Functionally, required for embryonic development and gonadogenesis. Also, functions redundantly with the transcriptional repressor lin-35 to regulate somatic gonad development. This is Transcriptional regulator ATRX homolog from Caenorhabditis elegans.